The primary structure comprises 104 residues: Large ribosomal subunit protein uL24 (104 aa).

This sequence belongs to the universal ribosomal protein uL24 family. Part of the 50S ribosomal subunit.

In terms of biological role, one of two assembly initiator proteins, it binds directly to the 5'-end of the 23S rRNA, where it nucleates assembly of the 50S subunit. Its function is as follows. One of the proteins that surrounds the polypeptide exit tunnel on the outside of the subunit. This Bartonella tribocorum (strain CIP 105476 / IBS 506) protein is Large ribosomal subunit protein uL24.